A 740-amino-acid polypeptide reads, in one-letter code: ATP-dependent RNA helicase DDX1 (740 aa).

The necessary for interaction with HNRNPK stretch occupies residues 1 to 295 (MAAFSEMGVM…APKALIVEPS (295 aa)). Residues 1 to 448 (MAAFSEMGVM…DTVHHVVVPV (448 aa)) form an interaction with dsRNA region. The necessary for interaction with RELA stretch occupies residues 1–525 (MAAFSEMGVM…KIDCDNLEQY (525 aa)). Residues 2 to 428 (AAFSEMGVMP…SEKIMHFPTW (427 aa)) form the Helicase ATP-binding domain. 46–53 (AETGSGKT) contacts ATP. The region spanning 70 to 247 (DQQEGKKGKA…LKFNFGEEEF (178 aa)) is the B30.2/SPRY domain. An N6-acetyllysine mark is found at Lys239 and Lys268. Lys281 bears the N6-acetyllysine; alternate mark. Residue Lys281 forms a Glycyl lysine isopeptide (Lys-Gly) (interchain with G-Cter in SUMO2); alternate linkage. The short motif at 370 to 373 (DEAD) is the DEAD box element. Ser481 carries the phosphoserine modification. A Helicase C-terminal domain is found at 493 to 681 (KGEYAVRAIK…QVEPDIKVPV (189 aa)). The necessary for interaction with HNRNPK stretch occupies residues 525–740 (YFMQQGGGPD…YLPNQLFRTF (216 aa)).

Belongs to the DEAD box helicase family. DDX1 subfamily. As to quaternary structure, found in a multi-helicase-TICAM1 complex at least composed of DHX36, DDX1, DDX21 and TICAM1; this complex exists in resting cells with or without poly(I:C) RNA ligand stimulation. Interacts with DHX36. Interacts (via B30.2/SPRY domain) with DDX21 (via N-terminus); this interaction serves as bridges to TICAM1. Interacts with FAM98A (via N- and C-terminus). Interacts with PHF5A (via C-terminus). Interacts with MBNL1. Interacts with CSTF2. Interacts with HNRNPK. Interacts with ATM. Interacts with RELA (via C-terminus). Component of the tRNA-splicing ligase complex. Interacts with PQBP1. Interacts with ERCC6. Phosphorylated by ATM kinase; phosphorylation is increased in response to ionizing radiation (IR).

The protein localises to the nucleus. It is found in the cytoplasm. The protein resides in the cytoplasmic granule. It localises to the cytosol. Its subcellular location is the mitochondrion. It carries out the reaction ATP + H2O = ADP + phosphate + H(+). Acts as an ATP-dependent RNA helicase, able to unwind both RNA-RNA and RNA-DNA duplexes. Possesses 5' single-stranded RNA overhang nuclease activity. Possesses ATPase activity on various RNA, but not DNA polynucleotides. May play a role in RNA clearance at DNA double-strand breaks (DSBs), thereby facilitating the template-guided repair of transcriptionally active regions of the genome. Together with RELA, acts as a coactivator to enhance NF-kappa-B-mediated transcriptional activation. Acts as a positive transcriptional regulator of cyclin CCND2 expression. Binds to the cyclin CCND2 promoter region. Associates with chromatin at the NF-kappa-B promoter region via association with RELA. Binds to poly(A) RNA. May be involved in 3'-end cleavage and polyadenylation of pre-mRNAs. Component of the tRNA-splicing ligase complex required to facilitate the enzymatic turnover of catalytic subunit RTCB: together with archease (ZBTB8OS), acts by facilitating the guanylylation of RTCB, a key intermediate step in tRNA ligation. Component of a multi-helicase-TICAM1 complex that acts as a cytoplasmic sensor of viral double-stranded RNA (dsRNA) and plays a role in the activation of a cascade of antiviral responses including the induction of pro-inflammatory cytokines via the adapter molecule TICAM1. Specifically binds (via helicase ATP-binding domain) on both short and long poly(I:C) dsRNA. This chain is ATP-dependent RNA helicase DDX1 (DDX1), found in Bos taurus (Bovine).